The primary structure comprises 428 residues: Sulfite exporter TauE/SafE family protein 6 (428 aa).

The next 11 helical transmembrane spans lie at 1–21 (MKTLFVLFILILCVFAINANQ), 61–81 (ALVVAGVLCFTAALISSASGI), 82–102 (GDGFFFIPIMNLVAGIDLKAA), 105–125 (FSAFMVTGGSIANLINNHFGC), 128–148 (LIDYDLALLLEPCMLLGVSVG), 149–169 (VICNKVFPEWLITGLFVVFLM), 245–265 (YWILLSLQIPLALVFTILALS), 294–314 (VMSFLAGLLGGIFGIGGGMII), 332–352 (TSFMVFFSATMSGVQYLLLGM), 356–376 (EAAYVFSVICFFASTLGLVFA), and 388–408 (IIVFLVGTMMYLTTIVMASFG).

This sequence belongs to the 4-toluene sulfonate uptake permease (TSUP) (TC 2.A.102) family.

Its subcellular location is the membrane. The protein is Sulfite exporter TauE/SafE family protein 6 of Arabidopsis thaliana (Mouse-ear cress).